We begin with the raw amino-acid sequence, 372 residues long: 3-isopropylmalate dehydrogenase (372 aa).

G79 to E90 provides a ligand contact to NAD(+). Residues R97, R107, R136, and D225 each coordinate substrate. 3 residues coordinate Mg(2+): D225, D250, and D254. NAD(+) is bound at residue G289–N300.

It belongs to the isocitrate and isopropylmalate dehydrogenases family. In terms of assembly, homodimer. It depends on Mg(2+) as a cofactor. Requires Mn(2+) as cofactor.

Its subcellular location is the cytoplasm. The catalysed reaction is (2R,3S)-3-isopropylmalate + NAD(+) = 4-methyl-2-oxopentanoate + CO2 + NADH. It participates in amino-acid biosynthesis; L-leucine biosynthesis; L-leucine from 3-methyl-2-oxobutanoate: step 3/4. Catalyzes the oxidation of 3-carboxy-2-hydroxy-4-methylpentanoate (3-isopropylmalate) to 3-carboxy-4-methyl-2-oxopentanoate. The product decarboxylates to 4-methyl-2 oxopentanoate. This Eremothecium gossypii (strain ATCC 10895 / CBS 109.51 / FGSC 9923 / NRRL Y-1056) (Yeast) protein is 3-isopropylmalate dehydrogenase (LEU2).